Here is a 675-residue protein sequence, read N- to C-terminus: Zinc finger protein 526 (675 aa).

3 C2H2-type zinc fingers span residues 56–78, 108–130, and 140–163; these read FMCS…QEQH, FQCG…QDAH, and YQCG…KTQH. The interval 160–195 is disordered; the sequence is KTQHLSSAADEPPSPLPPPTPPPPPPPPPPPPPPEV. Over residues 171-194 the composition is skewed to pro residues; that stretch reads PPSPLPPPTPPPPPPPPPPPPPPE. The C2H2-type 4 zinc finger occupies 200-222; that stretch reads YECPECSTLCATPEEFLEHQGTH. Positions 225-234 are enriched in basic and acidic residues; the sequence is SLEKEEHNGL. The segment at 225–283 is disordered; sequence SLEKEEHNGLEEEEEDEEEGEEEEDDDDEETDEEEASSELTADDTGSNKSTADSAQSCG. Residues 235–261 show a composition bias toward acidic residues; the sequence is EEEEEDEEEGEEEEDDDDEETDEEEAS. Residues 269-281 are compositionally biased toward polar residues; that stretch reads TGSNKSTADSAQS. 4 consecutive C2H2-type zinc fingers follow at residues 312-334, 339-361, 367-389, and 395-416; these read FHCS…GRAH, HECT…QRLH, YLCV…RRAH, and HRCR…RRTH. Residues 415–439 form a disordered region; the sequence is THTGKSGTPTRVATVSPAPAEPTPP. Positions 418 to 427 are enriched in polar residues; sequence GKSGTPTRVA. 5 C2H2-type zinc fingers span residues 447–470, 477–499, 505–527, 533–555, and 578–600; these read LPCP…RAVH, HRCG…LRTH, FQCH…QLTH, YQCL…RRLH, and YYCG…QRVH. The segment at 606–625 is disordered; sequence LTLQPPRSPSPVPPPPPEPQ. Residues 611–624 show a composition bias toward pro residues; sequence PRSPSPVPPPPPEP.

Belongs to the krueppel C2H2-type zinc-finger protein family.

It localises to the nucleus. Its function is as follows. May be involved in transcriptional regulation. The polypeptide is Zinc finger protein 526 (Znf526) (Mus musculus (Mouse)).